Reading from the N-terminus, the 508-residue chain is Photosystem II CP47 reaction center protein (508 aa).

The next 6 helical transmembrane spans lie at 21-36 (SVHIMHTALVAGWAGS), 101-115 (IMFSGLCFLAAIWHW), 140-156 (GIHLFLAGVACFGFGAF), 203-218 (IAAGTLGILAGLFHLS), 237-252 (VLSSSIAAVFFAAFVV), and 457-472 (SFALLFFFGHIWHGAR).

Belongs to the PsbB/PsbC family. PsbB subfamily. As to quaternary structure, PSII is composed of 1 copy each of membrane proteins PsbA, PsbB, PsbC, PsbD, PsbE, PsbF, PsbH, PsbI, PsbJ, PsbK, PsbL, PsbM, PsbT, PsbX, PsbY, PsbZ, Psb30/Ycf12, at least 3 peripheral proteins of the oxygen-evolving complex and a large number of cofactors. It forms dimeric complexes. Requires Binds multiple chlorophylls. PSII binds additional chlorophylls, carotenoids and specific lipids. as cofactor.

The protein localises to the plastid. It is found in the chloroplast thylakoid membrane. Its function is as follows. One of the components of the core complex of photosystem II (PSII). It binds chlorophyll and helps catalyze the primary light-induced photochemical processes of PSII. PSII is a light-driven water:plastoquinone oxidoreductase, using light energy to abstract electrons from H(2)O, generating O(2) and a proton gradient subsequently used for ATP formation. The chain is Photosystem II CP47 reaction center protein from Guizotia abyssinica (Niger).